The sequence spans 195 residues: Nascent polypeptide-associated complex subunit alpha (195 aa).

Disordered regions lie at residues 1 to 59 (MTGS…SRSE) and 132 to 153 (TREA…EEDS). Residues 7 to 16 (TRQKEVKEPQ) show a composition bias toward basic and acidic residues. Acidic residues predominate over residues 19–33 (VSDDSDNEAVEQELT). Residues 47-59 (DHIDKQAKQSRSE) show a composition bias toward basic and acidic residues. One can recognise an NAC-A/B domain in the interval 56 to 121 (SRSEKKARKL…AKIEDLTQHA (66 aa)). Residues 142–153 (EEDENEDVEEDS) are compositionally biased toward acidic residues.

This sequence belongs to the NAC-alpha family. As to quaternary structure, may be part of the nascent polypeptide-associated complex (NAC), which is a heterodimer of icd-2 and icd-1 (via NAC-A/B domains).

Its subcellular location is the cytoplasm. Its function is as follows. May prevent inappropriate targeting of non-secretory polypeptides to the endoplasmic reticulum (ER). Plays a role in the response to heat stress. In Caenorhabditis elegans, this protein is Nascent polypeptide-associated complex subunit alpha.